A 1323-amino-acid chain; its full sequence is MKRNGSRNCLNRRSRFGSRERDWLREDVKRGCVYLYGADTTTATTTTTTSSSSSSSSSSSDLHLVLCTVETPASEICAGEGRESLYLQLHGDLVRRLEPTERPLQIVYDYLSRLGFDDPVRIQEEATNPDLGCMIRFYGEKPCHMDRLDRILLSGIYNVRKGKTQLHKWAERLVVLCGTCLIVSSVKDCQTGKMHILPLVGGKIEEVKRRQYSLAFSSAGAQAQTYHVSFETLAEYQRWQRQASKVVSQRISTVDLSCYSLEEVPEHLFYSQDITYLNLRHNFMQLERPGGLDTLYKFSQLKGLNLSHNKLGLFPILLCEISTLTELNLSCNGFHDLPSQIGNLLNLQTLCLDGNFLTTLPEELGNLQQLSSLGISFNNFSQIPEVYEKLTMLDRVVMAGNCLEVLNLGVLNRMNHIKHVDLRMNHLKTMVIENLEGNKHITHVDLRDNRLTDLDLSSLCSLEQLHCGRNQLRELTLSGFSLRTLYASSNRLTAVNVYPVPSLLTFLDLSRNLLECVPDWACEAKKIEVLDVSYNLLTEVPVRILSSLSLRKLMLGHNHVQNLPTLVEHIPLEVLDLQHNALTRLPDTLFSKALNLRYLNASANSLESLPSACTGEESLSMLQLLYLTNNLLTDQCIPVLVGHLHLRILHLANNQLQTFPASKLNKLEQLEELNLSGNKLKTIPTTIANCKRLHTLVAHSNNISIFPEILQLPQIQFVDLSCNDLTEILIPEALPATLQDLDLTGNTNLVLEHKTLDIFSHITTLKIDQKPLPTTDSTVTSTFWSHGLAEMAGQRNKLCVSALAMDSFAEGVGAVYGMFDGDRNEELPRLLQCTMADVLLEEVQQSTNDTVFMANTFLVSHRKLGMAGQKLGSSALLCYIRPDTADPASSFSLTVANVGTCQAVLCRGGKPVPLSKVFSLEQDPEEAQRVKDQKAIITEDNKVNGVTCCTRMLGCTYLYPWILPKPHISSTPLTIQDELLILGNKALWEHLSYTEAVNAVRHVQDPLAAAKKLCTLAQSYGCQDNVGAMVVYLNIGEEGCTCEMNGLTLPGPVGFASTTTIKDAPKPATPSSSSGIASEFSSEMSTSEVSSEVGSTASDEHNAGGLDTALLPRPERRCSLHPTPTSGLFQRQPSSATFSSNQSDNGLDSDDDQPVEGVITNGSKVEVEVDIHCCRGRDLENSPPLIESSPTLCSEEHARGSCFGIRRQNSVNSGMLLPMSKDRMELQKSPSTSCLYGKKLSNGSIVPLEDSLNLIEVATEVPKRKTGYFAAPTQMEPEDQFVVPHDLEEEVKEQMKQHQDSRLEPEPHEEDRTEPPEEFDTAL.

Residues 150-248 (RILLSGIYNV…WQRQASKVVS (99 aa)) form the PH domain. 22 LRR repeats span residues 250 to 271 (RIST…LFYS), 273 to 296 (DITY…DTLY), 300 to 321 (QLKG…LCEI), 323 to 344 (TLTE…IGNL), 346 to 368 (NLQT…GNLQ), 369 to 390 (QLSS…YEKL), 392 to 412 (MLDR…GVLN), 416 to 439 (HIKH…EGNK), 440 to 460 (HITH…SSLC), 461 to 480 (SLEQ…LSGF), 481 to 502 (SLRT…PVPS), 503 to 524 (LLTF…ACEA), 526 to 547 (KIEV…ILSS), 549 to 570 (SLRK…VEHI), 571 to 592 (PLEV…LFSK), 595 to 616 (NLRY…CTGE), 621 to 644 (MLQL…VGHL), 645 to 666 (HLRI…KLNK), 669 to 690 (QLEE…IANC), 692 to 713 (RLHT…LQLP), 714 to 735 (QIQF…EALP), and 737 to 758 (TLQD…TLDI). Residues 785 to 1033 (SHGLAEMAGQ…DNVGAMVVYL (249 aa)) enclose the PPM-type phosphatase domain. Mn(2+) contacts are provided by D820, G821, K985, and D1024. Residues 1060–1157 (TIKDAPKPAT…DSDDDQPVEG (98 aa)) are disordered. A compositionally biased stretch (low complexity) spans 1071 to 1097 (SSSSGIASEFSSEMSTSEVSSEVGSTA). Over residues 1122-1146 (PTPTSGLFQRQPSSATFSSNQSDNG) the composition is skewed to polar residues. A Phosphoserine modification is found at S1210. The tract at residues 1285–1323 (HDLEEEVKEQMKQHQDSRLEPEPHEEDRTEPPEEFDTAL) is disordered. Residues 1292 to 1315 (KEQMKQHQDSRLEPEPHEEDRTEP) are compositionally biased toward basic and acidic residues.

Interacts with AKT1, AKT3 and PRKCB isoform beta-II. Interacts with STK4, RPS6KB1, RAF1. Interacts with FKBP5; FKBP5 acts as a scaffold for PHLPP2 and Akt. Interacts with NHERF1; NHERF1 scaffolds a heterotrimeric complex with PTEN. Mn(2+) is required as a cofactor. In colorectal cancer tissue, expression is highest in the surface epithelium of normal colonic mucosa adjacent to the cancer tissue but is largely excluded from the crypt bases. Expression is lost or significantly decreased in 80% of tested tumors (at protein level).

The protein resides in the cytoplasm. Its subcellular location is the membrane. It localises to the nucleus. The catalysed reaction is O-phospho-L-seryl-[protein] + H2O = L-seryl-[protein] + phosphate. The enzyme catalyses O-phospho-L-threonyl-[protein] + H2O = L-threonyl-[protein] + phosphate. Its activity is regulated as follows. Inhibited by AKT1, AKT2 and AKT3. Activated by oleic acid and arachidonic acid. In terms of biological role, protein phosphatase involved in regulation of Akt and PKC signaling. Mediates dephosphorylation in the C-terminal domain hydrophobic motif of members of the AGC Ser/Thr protein kinase family; specifically acts on 'Ser-473' of AKT1, 'Ser-660' of PRKCB isoform beta-II and 'Ser-657' of PRKCA. Akt regulates the balance between cell survival and apoptosis through a cascade that primarily alters the function of transcription factors that regulate pro- and antiapoptotic genes. Dephosphorylation of 'Ser-473' of Akt triggers apoptosis and decreases cell proliferation. Also controls the phosphorylation of AKT3. Dephosphorylates STK4 on 'Thr-387' leading to STK4 activation and apoptosis. Dephosphorylates RPS6KB1 and is involved in regulation of cap-dependent translation. Inhibits cancer cell proliferation and may act as a tumor suppressor. Dephosphorylation of PRKCA and PRKCB leads to their destabilization and degradation. Dephosphorylates RAF1 inhibiting its kinase activity. The sequence is that of PH domain leucine-rich repeat-containing protein phosphatase 2 (PHLPP2) from Homo sapiens (Human).